The primary structure comprises 50 residues: Insulin (50 aa).

3 disulfides stabilise this stretch: Cys-7-Cys-36, Cys-19-Cys-49, and Cys-35-Cys-40.

Belongs to the insulin family. Heterodimer of a B chain and an A chain linked by two disulfide bonds.

The protein localises to the secreted. Insulin decreases blood glucose concentration. It increases cell permeability to monosaccharides, amino acids and fatty acids. It accelerates glycolysis, the pentose phosphate cycle, and glycogen synthesis in liver. This is Insulin (ins) from Oncorhynchus gorbuscha (Pink salmon).